The following is a 382-amino-acid chain: Mannitol-1-phosphate 5-dehydrogenase (382 aa).

Ala3–Gly14 is an NAD(+) binding site. An N6-acetyllysine modification is found at Lys269.

Belongs to the mannitol dehydrogenase family.

The catalysed reaction is D-mannitol 1-phosphate + NAD(+) = beta-D-fructose 6-phosphate + NADH + H(+). This chain is Mannitol-1-phosphate 5-dehydrogenase, found in Escherichia coli O7:K1 (strain IAI39 / ExPEC).